Reading from the N-terminus, the 44-residue chain is MFKLFSTKYMRSAPVVAAAWITMTAGIIIEFNRFFPDLLFHPMS.

The helical transmembrane segment at 9-29 (YMRSAPVVAAAWITMTAGIII) threads the bilayer.

Belongs to the PsaJ family.

It is found in the cellular thylakoid membrane. Functionally, may help in the organization of the PsaE and PsaF subunits. This Prochlorococcus marinus (strain MIT 9312) protein is Photosystem I reaction center subunit IX.